The following is a 684-amino-acid chain: Acetophenone carboxylase delta subunit (684 aa).

It belongs to the oxoprolinase family. As to quaternary structure, acetophenone carboxylase consists of five subunits; a heterooctameric subcomplex of two alpha (Apc1), two beta (Apc2), two gamma (Apc3) and two delta (Apc4) subunits assembles with the epsilon (Apc5) subunit in an unknown stoichiometry. Mg(2+) serves as cofactor. It depends on Mn(2+) as a cofactor.

Its subcellular location is the cytoplasm. It carries out the reaction acetophenone + hydrogencarbonate + 2 ATP + H2O = 3-oxo-3-phenylpropanoate + 2 ADP + 2 phosphate + 2 H(+). Its activity is regulated as follows. Inhibited by zinc ions, carbamoylphosphate and beta,gamma-imido-ATP. Functionally, catalyzes the carboxylation of acetophenone to form 3-oxo-3-phenylpropanoate (benzoylacetate) in the anaerobic catabolism of ethylbenzene. Also carboxylates propiophenone at the same rate and 4-acetyl-pyridine at lower rates. This Aromatoleum aromaticum (strain DSM 19018 / LMG 30748 / EbN1) (Azoarcus sp. (strain EbN1)) protein is Acetophenone carboxylase delta subunit (apc4).